Reading from the N-terminus, the 427-residue chain is Serine--tRNA ligase (427 aa).

Position 230 to 232 (Thr230 to Glu232) interacts with L-serine. Arg261–Glu263 contributes to the ATP binding site. Position 284 (Glu284) interacts with L-serine. Glu348–Ser351 lines the ATP pocket. An L-serine-binding site is contributed by Ser384.

It belongs to the class-II aminoacyl-tRNA synthetase family. Type-1 seryl-tRNA synthetase subfamily. In terms of assembly, homodimer. The tRNA molecule binds across the dimer.

The protein resides in the cytoplasm. It catalyses the reaction tRNA(Ser) + L-serine + ATP = L-seryl-tRNA(Ser) + AMP + diphosphate + H(+). The catalysed reaction is tRNA(Sec) + L-serine + ATP = L-seryl-tRNA(Sec) + AMP + diphosphate + H(+). The protein operates within aminoacyl-tRNA biosynthesis; selenocysteinyl-tRNA(Sec) biosynthesis; L-seryl-tRNA(Sec) from L-serine and tRNA(Sec): step 1/1. In terms of biological role, catalyzes the attachment of serine to tRNA(Ser). Is also able to aminoacylate tRNA(Sec) with serine, to form the misacylated tRNA L-seryl-tRNA(Sec), which will be further converted into selenocysteinyl-tRNA(Sec). In Moorella thermoacetica (strain ATCC 39073 / JCM 9320), this protein is Serine--tRNA ligase.